The following is a 545-amino-acid chain: CTP synthase (545 aa).

Residues 1–266 (MTTNYIFVTG…DDYICKRFSL (266 aa)) are amidoligase domain. S14 lines the CTP pocket. S14 lines the UTP pocket. Residues 15-20 (SLGKGI) and D72 each bind ATP. The Mg(2+) site is built by D72 and E140. Residues 147-149 (DIE), 187-192 (KTKPTQ), and K223 contribute to the CTP site. Residues 187–192 (KTKPTQ) and K223 contribute to the UTP site. 239–241 (KDV) lines the ATP pocket. Residues 291–542 (TIGMVGKYIE…VKAASEYQKR (252 aa)) enclose the Glutamine amidotransferase type-1 domain. Position 352 (G352) interacts with L-glutamine. C379 (nucleophile; for glutamine hydrolysis) is an active-site residue. L-glutamine is bound by residues 380-383 (LGMQ), E403, and R470. Active-site residues include H515 and E517.

It belongs to the CTP synthase family. Homotetramer.

The enzyme catalyses UTP + L-glutamine + ATP + H2O = CTP + L-glutamate + ADP + phosphate + 2 H(+). The catalysed reaction is L-glutamine + H2O = L-glutamate + NH4(+). It catalyses the reaction UTP + NH4(+) + ATP = CTP + ADP + phosphate + 2 H(+). The protein operates within pyrimidine metabolism; CTP biosynthesis via de novo pathway; CTP from UDP: step 2/2. Allosterically activated by GTP, when glutamine is the substrate; GTP has no effect on the reaction when ammonia is the substrate. The allosteric effector GTP functions by stabilizing the protein conformation that binds the tetrahedral intermediate(s) formed during glutamine hydrolysis. Inhibited by the product CTP, via allosteric rather than competitive inhibition. Its function is as follows. Catalyzes the ATP-dependent amination of UTP to CTP with either L-glutamine or ammonia as the source of nitrogen. Regulates intracellular CTP levels through interactions with the four ribonucleotide triphosphates. This Citrobacter koseri (strain ATCC BAA-895 / CDC 4225-83 / SGSC4696) protein is CTP synthase.